A 561-amino-acid chain; its full sequence is Cytosolic purine 5'-nucleotidase (561 aa).

The Nucleophile role is filled by Asp-52. 2 residues coordinate GMP: Asp-52 and Asp-54. IMP contacts are provided by Asp-52 and Asp-54. Mg(2+) is bound by residues Asp-52 and Asp-54. The active-site Proton donor is Asp-54. Arg-144 contacts (2R)-2,3-bisphosphoglycerate. Residues Arg-144 and Asn-154 each contribute to the ATP site. Residues Arg-144 and Asn-154 each contribute to the dATP site. Asn-154 provides a ligand contact to adenosine. Asn-154 is a P(1),P(4)-bis(5'-adenosyl) tetraphosphate binding site. Positions 202, 206, 215, 249, and 250 each coordinate GMP. IMP is bound by residues Arg-202, Asp-206, Lys-215, Thr-249, Asn-250, Ser-251, and Lys-292. Lys-292 contacts GMP. Asp-351 lines the Mg(2+) pocket. A (2R)-2,3-bisphosphoglycerate-binding site is contributed by Lys-362. Position 362 (Lys-362) interacts with P(1),P(4)-bis(5'-adenosyl) tetraphosphate. Ser-418 carries the post-translational modification Phosphoserine. Adenosine-binding residues include Met-436 and Gln-453. Residues Gln-453 and Arg-456 each contribute to the ATP site. Positions 453 and 456 each coordinate dATP. Gln-453 is a binding site for P(1),P(4)-bis(5'-adenosyl) tetraphosphate. Tyr-457 lines the (2R)-2,3-bisphosphoglycerate pocket. Tyr-457 lines the P(1),P(4)-bis(5'-adenosyl) tetraphosphate pocket. Residues Ser-502, Ser-511, and Ser-527 each carry the phosphoserine modification. A disordered region spans residues 538–561; the sequence is PLAPQEITHCHDEDDDEEEEEEEE. Residues 548 to 561 form a required for tetramer assembly region; sequence HDEDDDEEEEEEEE. A compositionally biased stretch (acidic residues) spans 550–561; it reads EDDDEEEEEEEE.

Belongs to the 5'(3')-deoxyribonucleotidase family. As to quaternary structure, homotetramer. Requires Mg(2+) as cofactor. In terms of tissue distribution, widely expressed.

It localises to the cytoplasm. The protein resides in the cytosol. It carries out the reaction a ribonucleoside 5'-phosphate + H2O = a ribonucleoside + phosphate. The enzyme catalyses a 2'-deoxyribonucleoside + a ribonucleoside 5'-phosphate = a ribonucleoside + a 2'-deoxyribonucleoside 5'-phosphate. The catalysed reaction is IMP + H2O = inosine + phosphate. It catalyses the reaction GMP + H2O = guanosine + phosphate. It carries out the reaction dIMP + H2O = 2'-deoxyinosine + phosphate. The enzyme catalyses dGMP + H2O = 2'-deoxyguanosine + phosphate. The catalysed reaction is XMP + H2O = xanthosine + phosphate. It catalyses the reaction inosine + GMP = guanosine + IMP. It carries out the reaction dGMP + inosine = 2'-deoxyguanosine + IMP. The enzyme catalyses dIMP + inosine = 2'-deoxyinosine + IMP. The catalysed reaction is inosine + UMP = uridine + IMP. It catalyses the reaction inosine + CMP = cytidine + IMP. It carries out the reaction inosine + AMP = IMP + adenosine. With respect to regulation, allosterically activated by various compounds including ATP, 2,3-BPG/2,3-Bisphosphoglyceric acid and Ap4A/P1,P4-bis(5'-adenosyl) tetraphosphate. Binding of an allosteric activator is a prerequisiste to magnesium and substrate binding. Inhibited by inorganic phosphate. Its function is as follows. Broad specificity cytosolic 5'-nucleotidase that catalyzes the dephosphorylation of 6-hydroxypurine nucleoside 5'-monophosphates. In addition, possesses a phosphotransferase activity by which it can transfer a phosphate from a donor nucleoside monophosphate to an acceptor nucleoside, preferably inosine, deoxyinosine and guanosine. Has the highest activities for IMP and GMP followed by dIMP, dGMP and XMP. Could also catalyze the transfer of phosphates from pyrimidine monophosphates but with lower efficiency. Through these activities regulates the purine nucleoside/nucleotide pools within the cell. The chain is Cytosolic purine 5'-nucleotidase from Homo sapiens (Human).